We begin with the raw amino-acid sequence, 158 residues long: 6,7-dimethyl-8-ribityllumazine synthase (158 aa).

Residues F18, 50–52 (SYD), and 74–76 (AVI) contribute to the 5-amino-6-(D-ribitylamino)uracil site. 79 to 80 (ET) lines the (2S)-2-hydroxy-3-oxobutyl phosphate pocket. H82 functions as the Proton donor in the catalytic mechanism. L107 contributes to the 5-amino-6-(D-ribitylamino)uracil binding site. R122 lines the (2S)-2-hydroxy-3-oxobutyl phosphate pocket.

This sequence belongs to the DMRL synthase family.

The catalysed reaction is (2S)-2-hydroxy-3-oxobutyl phosphate + 5-amino-6-(D-ribitylamino)uracil = 6,7-dimethyl-8-(1-D-ribityl)lumazine + phosphate + 2 H2O + H(+). It functions in the pathway cofactor biosynthesis; riboflavin biosynthesis; riboflavin from 2-hydroxy-3-oxobutyl phosphate and 5-amino-6-(D-ribitylamino)uracil: step 1/2. Functionally, catalyzes the formation of 6,7-dimethyl-8-ribityllumazine by condensation of 5-amino-6-(D-ribitylamino)uracil with 3,4-dihydroxy-2-butanone 4-phosphate. This is the penultimate step in the biosynthesis of riboflavin. The polypeptide is 6,7-dimethyl-8-ribityllumazine synthase (Sulfolobus acidocaldarius (strain ATCC 33909 / DSM 639 / JCM 8929 / NBRC 15157 / NCIMB 11770)).